The sequence spans 282 residues: Keratin-associated protein 10-1 (282 aa).

24 consecutive repeat copies span residues 26-30 (CCEPH), 31-35 (CCALS), 36-40 (CCAPA), 57-61 (CCQAA), 79-83 (CCQQS), 89-93 (CCTSS), 99-103 (CCVPV), 104-108 (CCKPV), 109-113 (CCLPT), 121-125 (CCQQS), 131-135 (CCASS), 141-145 (CCVPV), 146-150 (CCKPV), 163-167 (CCQQS), 173-177 (CCTSS), 183-187 (CCVPV), 193-197 (CCKPI), 198-202 (CCVPV), 210-214 (CCQQS), 220-224 (CCTTS), 225-229 (CCRPS), 244-248 (CCMPV), 251-255 (CCAPA), and 262-266 (CCRPA). Residues 26–266 (CCEPHCCALS…SCQASCCRPA (241 aa)) are 24 X 5 AA repeats of C-C-X(3).

This sequence belongs to the KRTAP type 10 family. Interacts with hair keratins. As to expression, restricted to a narrow region of the hair fiber cuticle, lying approximately 20 cell layers above the apex of the dermal papilla of the hair root; not detected in any other tissues.

Functionally, in the hair cortex, hair keratin intermediate filaments are embedded in an interfilamentous matrix, consisting of hair keratin-associated proteins (KRTAP), which are essential for the formation of a rigid and resistant hair shaft through their extensive disulfide bond cross-linking with abundant cysteine residues of hair keratins. The matrix proteins include the high-sulfur and high-glycine-tyrosine keratins. The sequence is that of Keratin-associated protein 10-1 (KRTAP10-1) from Homo sapiens (Human).